We begin with the raw amino-acid sequence, 205 residues long: Glycerol-3-phosphate acyltransferase (205 aa).

Helical transmembrane passes span 8–28 (IALF…GYLA), 57–77 (TPAL…ILIA), 84–104 (ESLQ…PVWL), 118–138 (VFLG…LLIL), 143–163 (IVSL…LINS), and 164–184 (KETF…LVLW).

This sequence belongs to the PlsY family. As to quaternary structure, probably interacts with PlsX.

The protein localises to the cell inner membrane. It catalyses the reaction an acyl phosphate + sn-glycerol 3-phosphate = a 1-acyl-sn-glycero-3-phosphate + phosphate. The protein operates within lipid metabolism; phospholipid metabolism. Functionally, catalyzes the transfer of an acyl group from acyl-phosphate (acyl-PO(4)) to glycerol-3-phosphate (G3P) to form lysophosphatidic acid (LPA). This enzyme utilizes acyl-phosphate as fatty acyl donor, but not acyl-CoA or acyl-ACP. This is Glycerol-3-phosphate acyltransferase from Prochlorococcus marinus (strain SARG / CCMP1375 / SS120).